The primary structure comprises 1357 residues: DNA-directed RNA polymerase subunit beta (1357 aa).

The protein belongs to the RNA polymerase beta chain family. As to quaternary structure, the RNAP catalytic core consists of 2 alpha, 1 beta, 1 beta' and 1 omega subunit. When a sigma factor is associated with the core the holoenzyme is formed, which can initiate transcription.

It catalyses the reaction RNA(n) + a ribonucleoside 5'-triphosphate = RNA(n+1) + diphosphate. DNA-dependent RNA polymerase catalyzes the transcription of DNA into RNA using the four ribonucleoside triphosphates as substrates. In Pseudomonas fluorescens (strain ATCC BAA-477 / NRRL B-23932 / Pf-5), this protein is DNA-directed RNA polymerase subunit beta.